The sequence spans 156 residues: ATP synthase subunit b', chloroplastic (156 aa).

The chain crosses the membrane as a helical span at residues 24 to 44 (ATLPLVAIQFILLMVLLNILL).

It belongs to the ATPase B chain family. In terms of assembly, F-type ATPases have 2 components, F(1) - the catalytic core - and F(0) - the membrane proton channel. F(1) has five subunits: alpha(3), beta(3), gamma(1), delta(1), epsilon(1). F(0) has four main subunits: a(1), b(1), b'(1) and c(10-14). The alpha and beta chains form an alternating ring which encloses part of the gamma chain. F(1) is attached to F(0) by a central stalk formed by the gamma and epsilon chains, while a peripheral stalk is formed by the delta, b and b' chains.

The protein localises to the plastid. Its subcellular location is the chloroplast thylakoid membrane. In terms of biological role, f(1)F(0) ATP synthase produces ATP from ADP in the presence of a proton or sodium gradient. F-type ATPases consist of two structural domains, F(1) containing the extramembraneous catalytic core and F(0) containing the membrane proton channel, linked together by a central stalk and a peripheral stalk. During catalysis, ATP synthesis in the catalytic domain of F(1) is coupled via a rotary mechanism of the central stalk subunits to proton translocation. Functionally, component of the F(0) channel, it forms part of the peripheral stalk, linking F(1) to F(0). The b'-subunit is a diverged and duplicated form of b found in plants and photosynthetic bacteria. The polypeptide is ATP synthase subunit b', chloroplastic (Phaeodactylum tricornutum (strain CCAP 1055/1)).